A 577-amino-acid polypeptide reads, in one-letter code: Arginine--tRNA ligase (577 aa).

Positions 122-132 (PNVAKEMHVGH) match the 'HIGH' region motif.

Belongs to the class-I aminoacyl-tRNA synthetase family. Monomer.

It localises to the cytoplasm. It catalyses the reaction tRNA(Arg) + L-arginine + ATP = L-arginyl-tRNA(Arg) + AMP + diphosphate. The protein is Arginine--tRNA ligase of Histophilus somni (strain 129Pt) (Haemophilus somnus).